We begin with the raw amino-acid sequence, 78 residues long: Probable Fe(2+)-trafficking protein (78 aa).

It belongs to the Fe(2+)-trafficking protein family. As to quaternary structure, monomer.

Its function is as follows. Could be a mediator in iron transactions between iron acquisition and iron-requiring processes, such as synthesis and/or repair of Fe-S clusters in biosynthetic enzymes. The sequence is that of Probable Fe(2+)-trafficking protein from Wigglesworthia glossinidia brevipalpis.